The chain runs to 53 residues: Ribulose bisphosphate carboxylase large chain (53 aa).

Positions 1–2 (MS) are excised as a propeptide. Proline 3 is subject to N-acetylproline. Lysine 14 is modified (N6,N6,N6-trimethyllysine).

It belongs to the RuBisCO large chain family. Type I subfamily. Heterohexadecamer of 8 large chains and 8 small chains.

Its subcellular location is the plastid. It localises to the chloroplast. It catalyses the reaction 2 (2R)-3-phosphoglycerate + 2 H(+) = D-ribulose 1,5-bisphosphate + CO2 + H2O. The enzyme catalyses D-ribulose 1,5-bisphosphate + O2 = 2-phosphoglycolate + (2R)-3-phosphoglycerate + 2 H(+). Its function is as follows. RuBisCO catalyzes two reactions: the carboxylation of D-ribulose 1,5-bisphosphate, the primary event in carbon dioxide fixation, as well as the oxidative fragmentation of the pentose substrate in the photorespiration process. Both reactions occur simultaneously and in competition at the same active site. This Malus domestica (Apple) protein is Ribulose bisphosphate carboxylase large chain (rbcL).